Here is a 188-residue protein sequence, read N- to C-terminus: Mediator of RNA polymerase II transcription subunit 29 (188 aa).

The segment covering 1–11 (MAMLLNQSQPP) has biased composition (polar residues). Residues 1–27 (MAMLLNQSQPPQGREGGGTQVGSLGPG) are disordered.

This sequence belongs to the Mediator complex subunit 29 family. Component of the Mediator complex.

The protein localises to the nucleus. Functionally, component of the Mediator complex, a coactivator involved in the regulated transcription of nearly all RNA polymerase II-dependent genes. Mediator functions as a bridge to convey information from gene-specific regulatory proteins to the basal RNA polymerase II transcription machinery. Mediator is recruited to promoters by direct interactions with regulatory proteins and serves as a scaffold for the assembly of a functional preinitiation complex with RNA polymerase II and the general transcription factors. In Xenopus tropicalis (Western clawed frog), this protein is Mediator of RNA polymerase II transcription subunit 29 (med29).